The following is an 81-amino-acid chain: Protein Vpu (81 aa).

Topologically, residues 1-7 (MQPSQII) are extracellular. A helical membrane pass occupies residues 8–28 (AIAALVVAAIIAIVVWTIVFI). At 29–81 (EYRRIKRQRKIDCIIDRIRERAEDSGNESEGDREELSKLVEMGHHAPWDIDDL) the chain is on the cytoplasmic side. Phosphoserine; by host CK2 occurs at positions 53 and 57.

Belongs to the HIV-1 VPU protein family. As to quaternary structure, homopentamer. Interacts with host CD4 and BRTC; these interactions induce proteasomal degradation of CD4. Interacts with host BST2; this interaction leads to the degradation of host BST2. Interacts with host FBXW11. Interacts with host AP1M1; this interaction plays a role in the mistrafficking and subsequent degradation of host BST2. Interacts with host RANBP2; this interaction allows Vpu to down-regulate host BLM sumoylation. Post-translationally, phosphorylated by host CK2. This phosphorylation is necessary for interaction with human BTRC and degradation of CD4.

It is found in the host membrane. Ion channel activity is inhibited by hexamethylene amiloride in vitro. Enhances virion budding by targeting host CD4 and Tetherin/BST2 to proteasome degradation. Degradation of CD4 prevents any unwanted premature interactions between viral Env and its host receptor CD4 in the endoplasmic reticulum. Degradation of antiretroviral protein Tetherin/BST2 is important for virion budding, as BST2 tethers new viral particles to the host cell membrane. Mechanistically, Vpu bridges either CD4 or BST2 to BTRC, a substrate recognition subunit of the Skp1/Cullin/F-box protein E3 ubiquitin ligase, induces their ubiquitination and subsequent proteasomal degradation. The alteration of the E3 ligase specificity by Vpu seems to promote the degradation of host IKBKB, leading to NF-kappa-B down-regulation and subsequent apoptosis. Acts as a viroporin that forms an oligomeric ion channel in membranes. Modulates the host DNA repair mechanisms to promote degradation of nuclear viral cDNA in cells that are already productively infected in order to suppress immune sensing and proviral hyper-integration (superinfection). Manipulates PML-NBs and modulates SUMOylation of host BLM protein thereby enhancing its DNA-end processing activity toward viral unintegrated linear DNA. Also inhibits RAD52-mediated homologous repair of viral cDNA, preventing the generation of dead-end circular forms of single copies of the long terminal repeat and permitting sustained nucleolytic attack. The polypeptide is Protein Vpu (Homo sapiens (Human)).